The chain runs to 274 residues: Glutamate racemase (274 aa).

Residues 9–10 (DS) and 41–42 (YG) each bind substrate. The active-site Proton donor/acceptor is C73. 74–75 (NT) serves as a coordination point for substrate. C183 functions as the Proton donor/acceptor in the catalytic mechanism. A substrate-binding site is contributed by 184-185 (TH).

Belongs to the aspartate/glutamate racemases family.

The catalysed reaction is L-glutamate = D-glutamate. Its pathway is cell wall biogenesis; peptidoglycan biosynthesis. Functionally, provides the (R)-glutamate required for cell wall biosynthesis. The polypeptide is Glutamate racemase (Shewanella baltica (strain OS185)).